The primary structure comprises 337 residues: 25S rRNA (adenine(2142)-N(1))-methyltransferase (337 aa).

Residues glycine 180 and aspartate 201 each coordinate S-adenosyl-L-methionine.

It belongs to the BMT2 family.

The protein localises to the nucleus. It is found in the nucleolus. It carries out the reaction adenosine(2142) in 25S rRNA + S-adenosyl-L-methionine = N(1)-methyladenosine(2142) in 25S rRNA + S-adenosyl-L-homocysteine + H(+). Its function is as follows. S-adenosyl-L-methionine-dependent methyltransferase that specifically methylates the N(1) position of adenine 2142 in 25S rRNA. N(1)-methyladenine(2142) in 25S rRNA is present in helix 65, a region that accounts for most of the intersubunit surface of the large subunit. The protein is 25S rRNA (adenine(2142)-N(1))-methyltransferase of Saccharomyces cerevisiae (strain ATCC 204508 / S288c) (Baker's yeast).